A 426-amino-acid polypeptide reads, in one-letter code: Probable indole-3-pyruvate monooxygenase YUCCA8 (426 aa).

29–34 (GAGPSG) serves as a coordination point for FAD. 199–204 (GCGNSG) lines the NADP(+) pocket.

This sequence belongs to the FMO family. The cofactor is FAD. As to expression, expressed in root tips and in hydathodes. Expressed in root vasculature and quiescent center, but not in the meristematic zone of the root tip.

It catalyses the reaction indole-3-pyruvate + NADPH + O2 + H(+) = (indol-3-yl)acetate + CO2 + NADP(+) + H2O. Its pathway is plant hormone metabolism; auxin biosynthesis. In terms of biological role, involved in auxin biosynthesis. Belongs to the set of redundant YUCCA genes probably responsible for auxin biosynthesis in roots. The sequence is that of Probable indole-3-pyruvate monooxygenase YUCCA8 (YUC8) from Arabidopsis thaliana (Mouse-ear cress).